The following is a 92-amino-acid chain: Small ribosomal subunit protein uS19c (92 aa).

Belongs to the universal ribosomal protein uS19 family.

It is found in the plastid. Its subcellular location is the chloroplast. Protein S19 forms a complex with S13 that binds strongly to the 16S ribosomal RNA. The protein is Small ribosomal subunit protein uS19c of Draba nemorosa (Woodland whitlowgrass).